The sequence spans 430 residues: WD repeat-containing protein jip5 (430 aa).

WD repeat units lie at residues 9–48 (PLSS…AAAE), 72–111 (RHKG…VTSK), 117–158 (TNTD…SFKS), 215–262 (DQEE…DQSE), 272–318 (AGGE…GVVE), and 323–360 (DDIE…EEEE). Acidic residues predominate over residues 356–374 (EEEEEEEEEEQEDIEDNDD). Residues 356–430 (EEEEEEEEEE…NGILKFKGME (75 aa)) are disordered. The span at 382–397 (HALERDSDDSDARADS) shows a compositional bias: basic and acidic residues. Residues 405 to 416 (RKKRKKKKKGKK) show a composition bias toward basic residues.

The protein belongs to the WD repeat WDR55 family.

The protein localises to the nucleus. It is found in the nucleolus. This Botryotinia fuckeliana (strain B05.10) (Noble rot fungus) protein is WD repeat-containing protein jip5 (jip5).